The following is a 334-amino-acid chain: Spermatogenesis-associated protein 32 (334 aa).

Residues 24–98 (SDHHRHHHHH…TESPEQQNYR (75 aa)) form a disordered region. A compositionally biased stretch (acidic residues) spans 37–47 (ENEDEDTEVEA). The segment covering 48 to 60 (ELPRTEPPPKVDP) has biased composition (basic and acidic residues). Residues 77–98 (SKTTPETEGDSYTESPEQQNYR) show a composition bias toward polar residues. A phosphoserine mark is found at Ser135 and Ser138.

In terms of assembly, interacts with syntaxin-1 and ACTB. Highly expressed in the testis and weakly in the brain and heart.

This is Spermatogenesis-associated protein 32 (Spata32) from Mus musculus (Mouse).